Consider the following 502-residue polypeptide: ATP synthase subunit beta (502 aa).

156–163 (GGAGVGKT) provides a ligand contact to ATP.

Belongs to the ATPase alpha/beta chains family. In terms of assembly, F-type ATPases have 2 components, CF(1) - the catalytic core - and CF(0) - the membrane proton channel. CF(1) has five subunits: alpha(3), beta(3), gamma(1), delta(1), epsilon(1). CF(0) has three main subunits: a(1), b(2) and c(9-12). The alpha and beta chains form an alternating ring which encloses part of the gamma chain. CF(1) is attached to CF(0) by a central stalk formed by the gamma and epsilon chains, while a peripheral stalk is formed by the delta and b chains.

The protein localises to the cell membrane. The enzyme catalyses ATP + H2O + 4 H(+)(in) = ADP + phosphate + 5 H(+)(out). Functionally, produces ATP from ADP in the presence of a proton gradient across the membrane. The catalytic sites are hosted primarily by the beta subunits. The chain is ATP synthase subunit beta from Cellulophaga lytica (Cytophaga lytica).